The primary structure comprises 341 residues: Glyceraldehyde-3-phosphate dehydrogenase 2 (341 aa).

NAD(+) is bound by residues 12-13 (RI), Arg-78, and Thr-120. D-glyceraldehyde 3-phosphate-binding positions include 152–154 (SCT) and Thr-183. The Nucleophile role is filled by Cys-153. Residue Asn-184 participates in NAD(+) binding. D-glyceraldehyde 3-phosphate-binding positions include Arg-198, 211–212 (TG), and Arg-234. Asn-313 is a binding site for NAD(+).

This sequence belongs to the glyceraldehyde-3-phosphate dehydrogenase family. Homotetramer.

The protein localises to the cytoplasm. The enzyme catalyses D-glyceraldehyde 3-phosphate + phosphate + NAD(+) = (2R)-3-phospho-glyceroyl phosphate + NADH + H(+). The protein operates within carbohydrate degradation; glycolysis; pyruvate from D-glyceraldehyde 3-phosphate: step 1/5. Catalyzes the oxidative phosphorylation of glyceraldehyde 3-phosphate (G3P) to 1,3-bisphosphoglycerate (BPG) using the cofactor NAD. The first reaction step involves the formation of a hemiacetal intermediate between G3P and a cysteine residue, and this hemiacetal intermediate is then oxidized to a thioester, with concomitant reduction of NAD to NADH. The reduced NADH is then exchanged with the second NAD, and the thioester is attacked by a nucleophilic inorganic phosphate to produce BPG. The protein is Glyceraldehyde-3-phosphate dehydrogenase 2 (gapA2) of Staphylococcus aureus (strain COL).